The sequence spans 197 residues: Large ribosomal subunit protein uL10 (197 aa).

Positions 163–197 (GAPAAAEAPAAEESADSAAEAAAEAPAEAPAAEEN) are disordered.

The protein belongs to the universal ribosomal protein uL10 family. In terms of assembly, part of the ribosomal stalk of the 50S ribosomal subunit. The N-terminus interacts with L11 and the large rRNA to form the base of the stalk. The C-terminus forms an elongated spine to which L12 dimers bind in a sequential fashion forming a multimeric L10(L12)X complex.

Functionally, forms part of the ribosomal stalk, playing a central role in the interaction of the ribosome with GTP-bound translation factors. The chain is Large ribosomal subunit protein uL10 from Pseudarthrobacter chlorophenolicus (strain ATCC 700700 / DSM 12829 / CIP 107037 / JCM 12360 / KCTC 9906 / NCIMB 13794 / A6) (Arthrobacter chlorophenolicus).